We begin with the raw amino-acid sequence, 360 residues long: MQIIRHSEQTLKTALISKNPVLVSQYEKLDAGEQRLMNEAFQPASDLFGPITLHSPSDWITSHPEAPQDFEQFFSDPYRKTPSPNKRSIYIQSIGSLGNTRIISEEYIKWVTGYCKAYFYGLRVKLLEPVPVSATRCSFRVNENTHNLQIHAGDILKFLKKKKPEDAFCVVGITMIDLYPRDSWNFVFGQASLTDGVGIFSFARYGSDFYSMRYEGKVKKLKKTSSSDYSIFDNYYIPEITSVLLLRSCKTLTHEIGHIFGLRHCQWLACLMQGSNHLEEADRRPLNLCPICLRKLQCAIGFSTVERYKALVRWIDDESSDTPGATPEHSCEDNGNLPKPVEAFKEWKEWIIKCLAVLQK.

H254 provides a ligand contact to Zn(2+). The active-site Proton acceptor is E255. 6 residues coordinate Zn(2+): H258, H264, C265, C270, C289, and C292.

This sequence belongs to the peptidase M54 family. It depends on Zn(2+) as a cofactor.

In terms of biological role, probable zinc metalloprotease. This is Archaemetzincin-2 (AMZ2) from Pongo abelii (Sumatran orangutan).